The chain runs to 217 residues: Elongation factor Ts (217 aa).

The involved in Mg(2+) ion dislocation from EF-Tu stretch occupies residues 81–84 (TDFV).

The protein belongs to the EF-Ts family.

The protein resides in the cytoplasm. Its function is as follows. Associates with the EF-Tu.GDP complex and induces the exchange of GDP to GTP. It remains bound to the aminoacyl-tRNA.EF-Tu.GTP complex up to the GTP hydrolysis stage on the ribosome. The chain is Elongation factor Ts from Myxococcus xanthus (strain DK1622).